A 302-amino-acid polypeptide reads, in one-letter code: N(G),N(G)-dimethylarginine dimethylaminohydrolase (302 aa).

Substrate is bound by residues Asp102, Arg127, and Arg172. His201 acts as the Proton donor in catalysis. Catalysis depends on Cys295, which acts as the Nucleophile.

The protein belongs to the DDAH family.

The catalysed reaction is N(omega),N(omega)-dimethyl-L-arginine + H2O = dimethylamine + L-citrulline. It carries out the reaction N(omega)-methyl-L-arginine + H2O = L-citrulline + methylamine. Hydrolyzes N(G),N(G)-dimethyl-L-arginine (ADMA) and N(G)-monomethyl-L-arginine (MMA). The sequence is that of N(G),N(G)-dimethylarginine dimethylaminohydrolase from Mycobacterium tuberculosis (strain ATCC 25618 / H37Rv).